Consider the following 376-residue polypeptide: MLSRVSARSYSSAAQSIKLTAREAPGNLSTLSVVVNNAGSKAGKSGVAHLLSKYNFLNNEAKSALRFTRESELLGGIVSSDVTRDSIVLKTQFLKQDLPYFVEALGNVLTKTSFRDHELPETVLPAAKAQNAEAQGSNAFKAFESLHEISFRKGLGNPLYYDGTSPISVDEIKQFASEAYNTSNVSVFGSGVNEGDLKKFIGESAFSALPAGSSKTTPVELHNGKESRIRAAGGSVALIGVPIKTADFAKYEVLSAAIGSTYLPGSSAPLSQIPGAISKVLKYQDAGLFVICVCNSDAAVVAQGVKAAKKAVDSVSASDLSSATKAAELAVALQSRFESPVDVKIDASAAKSPAKLSEFNYVAVGNVDLLPYANEL.

The transit peptide at 1–16 (MLSRVSARSYSSAAQS) directs the protein to the mitochondrion.

Belongs to the peptidase M16 family. UQCRC2/QCR2 subfamily. Component of the ubiquinol-cytochrome c oxidoreductase (cytochrome b-c1 complex, complex III, CIII), a multisubunit enzyme composed of 3 respiratory subunits cytochrome b, cytochrome c1 and Rieske protein, 2 core protein subunits, and additional low-molecular weight protein subunits. The complex exists as an obligatory dimer and forms supercomplexes (SCs) in the inner mitochondrial membrane with cytochrome c oxidase (complex IV, CIV).

It localises to the mitochondrion inner membrane. Functionally, component of the ubiquinol-cytochrome c oxidoreductase, a multisubunit transmembrane complex that is part of the mitochondrial electron transport chain which drives oxidative phosphorylation. The respiratory chain contains 3 multisubunit complexes succinate dehydrogenase (complex II, CII), ubiquinol-cytochrome c oxidoreductase (cytochrome b-c1 complex, complex III, CIII) and cytochrome c oxidase (complex IV, CIV), that cooperate to transfer electrons derived from NADH and succinate to molecular oxygen, creating an electrochemical gradient over the inner membrane that drives transmembrane transport and the ATP synthase. The cytochrome b-c1 complex catalyzes electron transfer from ubiquinol to cytochrome c, linking this redox reaction to translocation of protons across the mitochondrial inner membrane, with protons being carried across the membrane as hydrogens on the quinol. In the process called Q cycle, 2 protons are consumed from the matrix, 4 protons are released into the intermembrane space and 2 electrons are passed to cytochrome c. The sequence is that of Cytochrome b-c1 complex subunit 2, mitochondrial (QCR2) from Debaryomyces hansenii (strain ATCC 36239 / CBS 767 / BCRC 21394 / JCM 1990 / NBRC 0083 / IGC 2968) (Yeast).